Reading from the N-terminus, the 274-residue chain is uncharacterized protein (274 aa).

The first 30 residues, 1-30 (MTVYTPTSERQAPATTHRQMWALGDYAAIA), serve as a signal peptide directing secretion.

This sequence to M.tuberculosis Rv1405c.

This is an uncharacterized protein from Mycobacterium tuberculosis (strain CDC 1551 / Oshkosh).